The chain runs to 491 residues: Mitochondrial distribution and morphology protein 12 (491 aa).

The region spanning 1 to 491 (MSIDLNWEAA…VFPSYWTFLV (491 aa)) is the SMP-LTD domain. Acidic residues predominate over residues 72-82 (ESDSSEDEDGE). Disordered regions lie at residues 72–123 (ESDS…NHHD), 201–313 (GWPD…MRER), and 389–434 (GDED…QPRR). 2 stretches are compositionally biased toward basic and acidic residues: residues 83 to 123 (GHDA…NHHD) and 213 to 229 (MTDHTTGRTRREDHNKN). A compositionally biased stretch (polar residues) spans 230–249 (ETGSPSRPSTAHTNPTQLSH). Residues 252–262 (SAASSSNNTSN) show a composition bias toward low complexity. Over residues 270-279 (DHTSSTTATT) the composition is skewed to polar residues. Positions 400–421 (STANTTTAASGSSTDNNNNNNE) are enriched in low complexity.

Belongs to the MDM12 family. In terms of assembly, component of the ER-mitochondria encounter structure (ERMES) or MDM complex, composed of mmm1, mdm10, mdm12 and mdm34. A mmm1 homodimer associates with one molecule of mdm12 on each side in a pairwise head-to-tail manner, and the SMP-LTD domains of mmm1 and mdm12 generate a continuous hydrophobic tunnel for phospholipid trafficking.

Its subcellular location is the mitochondrion outer membrane. It is found in the endoplasmic reticulum membrane. In terms of biological role, component of the ERMES/MDM complex, which serves as a molecular tether to connect the endoplasmic reticulum (ER) and mitochondria. Components of this complex are involved in the control of mitochondrial shape and protein biogenesis, and function in nonvesicular lipid trafficking between the ER and mitochondria. Mdm12 is required for the interaction of the ER-resident membrane protein mmm1 and the outer mitochondrial membrane-resident beta-barrel protein mdm10. The mdm12-mmm1 subcomplex functions in the major beta-barrel assembly pathway that is responsible for biogenesis of all mitochondrial outer membrane beta-barrel proteins, and acts in a late step after the SAM complex. The mdm10-mdm12-mmm1 subcomplex further acts in the TOM40-specific pathway after the action of the mdm12-mmm1 complex. Essential for establishing and maintaining the structure of mitochondria and maintenance of mtDNA nucleoids. The protein is Mitochondrial distribution and morphology protein 12 of Talaromyces stipitatus (strain ATCC 10500 / CBS 375.48 / QM 6759 / NRRL 1006) (Penicillium stipitatum).